The sequence spans 623 residues: Isocitrate dehydrogenase kinase/phosphatase (623 aa).

ATP contacts are provided by residues 344-350 and lysine 365; that span reads APGIKGM. Aspartate 400 is an active-site residue.

It belongs to the AceK family.

The protein localises to the cytoplasm. It catalyses the reaction L-seryl-[isocitrate dehydrogenase] + ATP = O-phospho-L-seryl-[isocitrate dehydrogenase] + ADP + H(+). Bifunctional enzyme which can phosphorylate or dephosphorylate isocitrate dehydrogenase (IDH) on a specific serine residue. This is a regulatory mechanism which enables bacteria to bypass the Krebs cycle via the glyoxylate shunt in response to the source of carbon. When bacteria are grown on glucose, IDH is fully active and unphosphorylated, but when grown on acetate or ethanol, the activity of IDH declines drastically concomitant with its phosphorylation. The chain is Isocitrate dehydrogenase kinase/phosphatase from Polaromonas naphthalenivorans (strain CJ2).